A 116-amino-acid polypeptide reads, in one-letter code: Ribosome-binding factor A (116 aa).

This sequence belongs to the RbfA family. Monomer. Binds 30S ribosomal subunits, but not 50S ribosomal subunits or 70S ribosomes.

It localises to the cytoplasm. In terms of biological role, one of several proteins that assist in the late maturation steps of the functional core of the 30S ribosomal subunit. Associates with free 30S ribosomal subunits (but not with 30S subunits that are part of 70S ribosomes or polysomes). Required for efficient processing of 16S rRNA. May interact with the 5'-terminal helix region of 16S rRNA. This chain is Ribosome-binding factor A, found in Chlorobium phaeobacteroides (strain BS1).